The following is a 276-amino-acid chain: Pantothenate synthetase (276 aa).

An ATP-binding site is contributed by 27–34 (MGALHRGH). H34 serves as the catalytic Proton donor. Q58 is a (R)-pantoate binding site. Residue Q58 coordinates beta-alanine. 147-150 (GKKD) provides a ligand contact to ATP. (R)-pantoate is bound at residue Q153. ATP is bound by residues V176 and 184 to 187 (LSSR).

This sequence belongs to the pantothenate synthetase family. In terms of assembly, homodimer.

It localises to the cytoplasm. It carries out the reaction (R)-pantoate + beta-alanine + ATP = (R)-pantothenate + AMP + diphosphate + H(+). Its pathway is cofactor biosynthesis; (R)-pantothenate biosynthesis; (R)-pantothenate from (R)-pantoate and beta-alanine: step 1/1. In terms of biological role, catalyzes the condensation of pantoate with beta-alanine in an ATP-dependent reaction via a pantoyl-adenylate intermediate. This is Pantothenate synthetase from Helicobacter pylori (strain G27).